An 826-amino-acid polypeptide reads, in one-letter code: Periplasmic nitrate reductase (826 aa).

The tat-type signal signal peptide spans 1–32; the sequence is MSISRREFLKANAAVAAATAVGATLPVKIVEA. A 4Fe-4S Mo/W bis-MGD-type domain is found at 39–95; it reads IKWDKAPCRFCGVGCSVLVGTDNGKVVATKGDPESPVNKGLNCIKGYFLSKIMYGKD. [4Fe-4S] cluster contacts are provided by cysteine 46, cysteine 49, cysteine 53, and cysteine 81. Mo-bis(molybdopterin guanine dinucleotide) is bound by residues lysine 83, glutamine 150, asparagine 175, cysteine 179, 212 to 219, 262 to 264, methionine 372, glutamine 376, asparagine 482, 508 to 509, lysine 531, aspartate 558, and 716 to 725; these read WGANMAEM, QSD, SD, and TGRVLEHWHT. Residue phenylalanine 792 coordinates substrate. 2 residues coordinate Mo-bis(molybdopterin guanine dinucleotide): asparagine 800 and lysine 817.

This sequence belongs to the prokaryotic molybdopterin-containing oxidoreductase family. NasA/NapA/NarB subfamily. Component of the periplasmic nitrate reductase NapAB complex composed of NapA and NapB. [4Fe-4S] cluster is required as a cofactor. It depends on Mo-bis(molybdopterin guanine dinucleotide) as a cofactor. Post-translationally, predicted to be exported by the Tat system. The position of the signal peptide cleavage has not been experimentally proven.

It is found in the periplasm. The enzyme catalyses 2 Fe(II)-[cytochrome] + nitrate + 2 H(+) = 2 Fe(III)-[cytochrome] + nitrite + H2O. Functionally, catalytic subunit of the periplasmic nitrate reductase complex NapAB. Receives electrons from NapB and catalyzes the reduction of nitrate to nitrite. The protein is Periplasmic nitrate reductase of Shewanella halifaxensis (strain HAW-EB4).